The chain runs to 118 residues: Non-specific lipid-transfer protein (118 aa).

A signal peptide spans 1–27 (MGVSKVAIAVAVMLMVVVINHPAVVEG). 4 disulfides stabilise this stretch: C30–C75, C40–C54, C55–C100, and C77–C114.

Belongs to the plant LTP family. Disulfide bonds.

Its function is as follows. Plant non-specific lipid-transfer proteins transfer phospholipids as well as galactolipids across membranes. May play a role in wax or cutin deposition in the cell walls of expanding epidermal cells and certain secretory tissues. In Apium graveolens (Celery), this protein is Non-specific lipid-transfer protein.